The following is an 84-amino-acid chain: Small ribosomal subunit protein bS20 (84 aa).

The interval 1-22 (MPAPTKRERQNRKRFERNRSVR) is disordered. Residues 9-22 (RQNRKRFERNRSVR) show a composition bias toward basic residues.

This sequence belongs to the bacterial ribosomal protein bS20 family.

Functionally, binds directly to 16S ribosomal RNA. The sequence is that of Small ribosomal subunit protein bS20 from Rubrobacter xylanophilus (strain DSM 9941 / JCM 11954 / NBRC 16129 / PRD-1).